The following is a 102-amino-acid chain: Small ribosomal subunit protein uS10 (102 aa).

This sequence belongs to the universal ribosomal protein uS10 family. Part of the 30S ribosomal subunit.

Its function is as follows. Involved in the binding of tRNA to the ribosomes. This is Small ribosomal subunit protein uS10 from Moorella thermoacetica (strain ATCC 39073 / JCM 9320).